Consider the following 672-residue polypeptide: Forkhead box protein O3 (672 aa).

Disordered stretches follow at residues 1-85 (MAEA…GVSS) and 110-152 (GPAS…CSSR). The residue at position 30 (Ser-30) is a Phosphoserine. The residue at position 32 (Thr-32) is a Phosphothreonine. Position 46 is an N6-methyllysine (Lys-46). Positions 57-68 (IPEEDDDEDDED) are enriched in acidic residues. Residues 80–108 (GGGVSSTLGSGLLLEDSAMLLAPGGQDLG) form a required for mitochondrial import region. Positions 110–129 (GPASAAGALSGGTPTQLQPQ) are enriched in low complexity. The residue at position 148 (Lys-148) is an N6-methyllysine. Residues 156 to 250 (WGNLSYADLI…KSGKAPRRRA (95 aa)) constitute a DNA-binding region (fork-head). Thr-178 carries the phosphothreonine modification. Ser-208 and Ser-214 each carry phosphoserine. Position 229 is an N6-methyllysine (Lys-229). Residues 230–301 (SSWWIINPDG…GSPTSRSSDE (72 aa)) form a disordered region. Lys-241 bears the N6-acetyllysine mark. Residues 241–258 (KSGKAPRRRAVSMDNSNK) carry the Nuclear localization signal motif. Ser-252 bears the Phosphoserine mark. Residues 260–271 (TKSRGRAAKKKA) are compositionally biased toward basic residues. An N6-methyllysine mark is found at Lys-261 and Lys-270. Phosphoserine is present on residues Ser-279 and Ser-283. The span at 282 to 297 (DSPSQLSKWPGSPTSR) shows a compositional bias: polar residues. Lys-289 is subject to N6-methyllysine. Residue Ser-293 is modified to Phosphoserine. Ser-298 carries the post-translational modification Phosphoserine; by CaMK2A. The mediates interaction with CHUK/IKKA and IKBKB/IKKB stretch occupies residues 299-672 (SDELDAWTDF…QASSQSWVPG (374 aa)). Ser-310 is subject to Phosphoserine. Ser-314 carries the post-translational modification Phosphoserine; by SGK1. Ser-398 and Ser-412 each carry phosphoserine; by AMPK. 2 disordered regions span residues 399–441 (QPSP…SLNS) and 535–583 (HQHQ…QTLS). Polar residues-rich tracts occupy residues 409-441 (RGSSFPYTAKSSGLGSPTGSFNSTVFGPSSLNS) and 548-577 (ALSNSVSNMGLSDSSSLGSAKHQQQSPASQ). At Lys-418 the chain carries N6-methyllysine. Ser-420 is modified (phosphoserine). The residue at position 550 (Ser-550) is a Phosphoserine; by MAPKAPK5. The residue at position 554 (Ser-554) is a Phosphoserine; by AMPK and MAPKAPK5. Ser-587 and Ser-625 each carry phosphoserine; by AMPK. Ser-643 is subject to Phosphoserine; by IKKB.

In terms of assembly, upon metabolic stress, forms a complex composed of FOXO3, SIRT3 and mitochondrial RNA polymerase POLRMT; the complex is recruited to mtDNA in a SIRT3-dependent manner. Also forms a complex composed of FOXO3, SIRT3, TFAM and POLRMT. Interacts with SIRT2; the interaction occurs independently of SIRT2 deacetylase activity. Interacts with YWHAB/14-3-3-beta and YWHAZ/14-3-3-zeta, which are required for cytosolic sequestration. Upon oxidative stress, interacts with STK4/MST1, which disrupts interaction with YWHAB/14-3-3-beta and leads to nuclear translocation. Interacts with PIM1. Interacts with DDIT3/CHOP. Interacts (deacetylated form) with SKP2. Interacts with CHUK and IKBKB. Interacts with CAMK2A, CAMK2B and calcineurin A. Interacts with NUPR1; this interaction represses FOXO3 transactivation. Deacetylation by SIRT1 or SIRT2 stimulates interaction of FOXO3 with SKP2 and facilitates SCF(SKP2)-mediated FOXO3 ubiquitination and proteasomal degradation. Deacetylation by SIRT2 stimulates FOXO3-mediated transcriptional activity in response to oxidative stress. Deacetylated by SIRT3. Deacetylation by SIRT3 stimulates FOXO3-mediated mtDNA transcriptional activity in response to metabolic stress. Post-translationally, in the presence of survival factors such as IGF1, phosphorylated on Thr-32 and Ser-252 by AKT1/PKB. This phosphorylated form then interacts with 14-3-3 proteins and is retained in the cytoplasm. Survival factor withdrawal induces dephosphorylation and promotes translocation to the nucleus where the dephosphorylated protein induces transcription of target genes and triggers apoptosis. Although AKT1/PKB doesn't appear to phosphorylate Ser-314 directly, it may activate other kinases that trigger phosphorylation at this residue. Phosphorylated by STK4/MST1 on Ser-208 upon oxidative stress, which leads to dissociation from YWHAB/14-3-3-beta and nuclear translocation. Phosphorylated by PIM1. Phosphorylation by AMPK leads to the activation of transcriptional activity without affecting subcellular localization. Phosphorylated by AMPK on Ser-30 in response to metabolic stress which mediates FOXO3 mitochondrial translocation. Phosphorylation by MAPKAPK5 promotes nuclear localization and DNA-binding, leading to induction of miR-34b and miR-34c expression, 2 post-transcriptional regulators of MYC that bind to the 3'UTR of MYC transcript and prevent its translation. Phosphorylated by CHUK/IKKA and IKBKB/IKKB. TNF-induced inactivation of FOXO3 requires its phosphorylation at Ser-643 by IKBKB/IKKB which promotes FOXO3 retention in the cytoplasm, polyubiquitination and ubiquitin-mediated proteasomal degradation. May be dephosphorylated by calcineurin A on Ser-298 which abolishes FOXO3 transcriptional activity. Phosphorylation at Ser-252 promotes its degradation by the proteasome. Dephosphorylation at Ser-252 by protein phosphatase 2A (PPP2CA) promotes its stabilization; interaction with PPP2CA is enhanced by AMBRA1. In terms of processing, heavily methylated by SET9 which decreases stability, while moderately increasing transcriptional activity. The main methylation site is Lys-270. Methylation doesn't affect subcellular location. Polyubiquitinated. Ubiquitinated by a SCF complex containing SKP2, leading to proteasomal degradation. Post-translationally, the N-terminus is cleaved following import into the mitochondrion. As to expression, expressed in white and brown adipose tissues (at protein level). Expressed in liver, kidney, lung and colon (at protein level). Expressed in skeletal muscles (at protein level).

It is found in the cytoplasm. The protein localises to the cytosol. The protein resides in the nucleus. Its subcellular location is the mitochondrion matrix. It localises to the mitochondrion outer membrane. Transcriptional activator that recognizes and binds to the DNA sequence 5'-[AG]TAAA[TC]A-3' and regulates different processes, such as apoptosis and autophagy. Acts as a positive regulator of autophagy in skeletal muscle: in starved cells, enters the nucleus following dephosphorylation and binds the promoters of autophagy genes, such as GABARAP1L, MAP1LC3B and ATG12, thereby activating their expression, resulting in proteolysis of skeletal muscle proteins. Triggers apoptosis in the absence of survival factors, including neuronal cell death upon oxidative stress. Participates in post-transcriptional regulation of MYC: following phosphorylation by MAPKAPK5, promotes induction of miR-34b and miR-34c expression, 2 post-transcriptional regulators of MYC that bind to the 3'UTR of MYC transcript and prevent its translation. In response to metabolic stress, translocates into the mitochondria where it promotes mtDNA transcription. Also acts as a key regulator of chondrogenic commitment of skeletal progenitor cells in response to lipid availability: when lipids levels are low, translocates to the nucleus and promotes expression of SOX9, which induces chondrogenic commitment and suppresses fatty acid oxidation. Also acts as a key regulator of regulatory T-cells (Treg) differentiation by activating expression of FOXP3. The chain is Forkhead box protein O3 from Mus musculus (Mouse).